Consider the following 123-residue polypeptide: Alpha-lactalbumin (123 aa).

Residues 1–123 (KQFTKCELSQ…KLEQWLCEKE (123 aa)) form the C-type lysozyme domain. Cystine bridges form between cysteine 6-cysteine 120, cysteine 28-cysteine 111, cysteine 61-cysteine 77, and cysteine 73-cysteine 91. An N-linked (GlcNAc...) asparagine glycan is attached at asparagine 45. Lysine 79, aspartate 82, aspartate 84, aspartate 87, and aspartate 88 together coordinate Ca(2+).

The protein belongs to the glycosyl hydrolase 22 family. As to quaternary structure, lactose synthase (LS) is a heterodimer of a catalytic component, beta1,4-galactosyltransferase (beta4Gal-T1) and a regulatory component, alpha-lactalbumin (LA). As to expression, mammary gland specific. Secreted in milk.

The protein localises to the secreted. Functionally, regulatory subunit of lactose synthase, changes the substrate specificity of galactosyltransferase in the mammary gland making glucose a good acceptor substrate for this enzyme. This enables LS to synthesize lactose, the major carbohydrate component of milk. In other tissues, galactosyltransferase transfers galactose onto the N-acetylglucosamine of the oligosaccharide chains in glycoproteins. The polypeptide is Alpha-lactalbumin (LALBA) (Papio cynocephalus (Yellow baboon)).